A 673-amino-acid chain; its full sequence is MAAATSPPRAERKRWGGGRLPGARRGSAGLAKKCPFSLELAEGGPTGGALYAPIGPPGVPGPSSPAAPAASPAAADLGPRPRVSLDPRVSIYSARRPLLARTHIQGRVYNFLERPTGWKCFVYHFAVFLIVLVCLIFSVLSTIEQYVALATGTLFWMEIVLVVFFGTEYAVRLWSAGCRSKYVGIWGRLRFARKPISIIDLIVVVASMVVLCVGSKGQVFATSAIRGIRFLQILRMLHVDRQGGTWRLLGSVVFIHRQELITTLYIGFLGLIFSSYFVYLAEKDAVNESGQVEFGSYADALWWGVVTVTTIGYGDKVPQTWVGKTIASCFSVFAISFFALPAGILGSGFALKVQQKQRQKHFNRQIPAAASLIQTAWRCYAAENPDSSTWKIYVRKPSRSQALLSPSPKPKKSVMVKKKKFKLDKDNGLSPGEKMLAVPQITCDLASEEQRPDHFSVDGCDNSVKKSPTLLEVSTAQFTRTNSFAEDLDLEGETLLTPITHVSQLREHHRATIKVIRRMQYFVAKKKFQQARKPYDVRDVIEQYSQGHLNLMVRIKELQRRLDQSIGRPALFISSSEKVKDRGSNTIGARLNRVEDKVTQLDQRLELITDMLQQLLSLHRGGTPGSRAPGGGGAQVAQPCSGGSINPELFLPSNALPTYEQLTVPGRGPEEGS.

2 disordered regions span residues 1–28 (MAAA…RGSA) and 61–80 (GPSS…LGPR). Residues 1-118 (MAAATSPPRA…YNFLERPTGW (118 aa)) are Cytoplasmic-facing. The residue at position 27 (S27) is a Phosphoserine. Over residues 66–75 (AAPAASPAAA) the composition is skewed to low complexity. The helical transmembrane segment at 119 to 140 (KCFVYHFAVFLIVLVCLIFSVL) threads the bilayer. Over 141–151 (STIEQYVALAT) the chain is Extracellular. A helical membrane pass occupies residues 152–174 (GTLFWMEIVLVVFFGTEYAVRLW). The Cytoplasmic segment spans residues 175–190 (SAGCRSKYVGIWGRLR). A helical membrane pass occupies residues 191-216 (FARKPISIIDLIVVVASMVVLCVGSK). Topologically, residues 217–224 (GQVFATSA) are extracellular. A helical; Voltage-sensor transmembrane segment spans residues 225-240 (IRGIRFLQILRMLHVD). Residues 236–244 (MLHVDRQGG) form an interaction with KCNE3 region. Topologically, residues 241–258 (RQGGTWRLLGSVVFIHRQ) are cytoplasmic. Q242 provides a ligand contact to a 1,2-diacyl-sn-glycero-3-phospho-(1D-myo-inositol-4,5-bisphosphate). Residues 259–281 (ELITTLYIGFLGLIFSSYFVYLA) traverse the membrane as a helical segment. Residues 282-297 (EKDAVNESGQVEFGSY) lie on the Extracellular side of the membrane. N-linked (GlcNAc...) asparagine glycosylation is present at N287. Residues 298 to 318 (ADALWWGVVTVTTIGYGDKVP) constitute an intramembrane region (pore-forming). Residues 319–320 (QT) are Extracellular-facing. A helical transmembrane segment spans residues 321–346 (WVGKTIASCFSVFAISFFALPAGILG). Residues 347–673 (SGFALKVQQK…VPGRGPEEGS (327 aa)) lie on the Cytoplasmic side of the membrane. An interaction with CALM region spans residues 368–380 (AAASLIQTAWRCY). S405 and S407 each carry phosphoserine. An interaction with CALM; calcium-dependent region spans residues 514–528 (KVIRRMQYFVAKKKF). An interaction with KCNE1 C-terminus region spans residues 534–571 (PYDVRDVIEQYSQGHLNLMVRIKELQRRLDQSIGRPAL). Residues 587–615 (IGARLNRVEDKVTQLDQRLELITDMLQQL) are interaction with AKAP9. Residues 588 to 619 (GARLNRVEDKVTQLDQRLELITDMLQQLLSLH) are C-terminal assembly domain (tetramerization). The disordered stretch occupies residues 619-673 (HRGGTPGSRAPGGGGAQVAQPCSGGSINPELFLPSNALPTYEQLTVPGRGPEEGS). Over residues 622 to 634 (GTPGSRAPGGGGA) the composition is skewed to gly residues.

The protein belongs to the potassium channel family. KQT (TC 1.A.1.15) subfamily. Kv7.1/KCNQ1 sub-subfamily. As to quaternary structure, tetramer. Heterotetramer with KCNE1; targets to the membrane raft. Interacts (via C-terminus) with CALM; forms a heterooctameric structure (with 4:4 KCNQ1:CALM stoichiometry) in a calcium-independent manner. Interacts with AKAP9; targets protein kinase A (PKA) catalytic and regulatory subunits and protein phosphatase 1 (PP1) to the KCNQ1-KCNE1 complex, allowing PKA-mediated phosphorylation and increase of delayed rectifier potassium channel activity. Interacts with KCNE2; form a heterooligomer complex that targets to the membrane raft and leading to currents with an apparently instantaneous activation, a rapid deactivation process and a linear current-voltage relationship and decreases the amplitude of the outward current. Interacts with AP2M1; mediates estrogen-induced internalization via clathrin-coated vesicles. Interacts with NEDD4L; promotes internalization and decreases I(Ks) currents. Interacts with USP2; counteracts the NEDD4L-specific down-regulation of I(Ks) and restore plasma membrane localization. Heterotetramer with KCNQ5; has a voltage-gated potassium channel activity. Interacts with KCNE3; four KCNE3 molecules are bound to one KCNQ1 tetramer (4:4 KCNQ1:KCNE3 stoichiometry); alters membrane raft localization; affects KCNQ1 structure and gating properties. Interacts with KCNE4; impairs KCNQ1 localization in lipid rafts and inhibits voltage-gated potassium channel activity. Interacts with KCNE5; impairs KCNQ1 localization in lipid rafts and only conducts current upon strong and continued depolarization. Interacts with SLC5A3; forms coregulatory channel-transporter complexes that modulate Na(+)-coupled myo-inositol influx through the transporter. In terms of processing, ubiquitinated by NEDD4L; promotes internalization. The ubiquitinylated form is internalized through a clathrin-mediated endocytosis by interacting with AP2M1 and is recycled back to the cell membrane via RAB4A and RAB11A. Post-translationally, deubiquitinated by USP2; counteracts the NEDD4L-specific down-regulation of I(Ks) and restores the membrane localization.

It is found in the cell membrane. The protein localises to the cytoplasmic vesicle membrane. The protein resides in the early endosome. Its subcellular location is the membrane raft. It localises to the endoplasmic reticulum. It is found in the basolateral cell membrane. The protein localises to the apical cell membrane. It carries out the reaction K(+)(in) = K(+)(out). Its activity is regulated as follows. PIP2 molecule is essential to activate KCNQ channels by inducing the coupling of the voltage-sensing domain (VSD) and the pore-forming domain (PD). Upon channel activation, PIP2 disrupts the VSD-calmodulin/CALM interactions, causing the release of CALM from the VSD which triggers the opening of the gate. Calcium potentiates KCNQ1 channel current through calcium-bound CALM. Calcium-bound CALM competes with PIP2 to stabilize the channel open state. Pore-forming subunit of the voltage-gated potassium (Kv) channel involved in the regulation of cardiomyocyte excitability and important in normal development and functions of myocardium, inner ear, stomach and colon. Associates with KCNE beta subunits that modulates current kinetics. Induces a voltage-dependent by rapidly activating and slowly deactivating potassium-selective outward current. Also promotes a delayed voltage activated potassium current showing outward rectification characteristic. During beta-adrenergic receptor stimulation participates in cardiac repolarization by associating with KCNE1 to form the I(Ks) cardiac potassium current that increases the amplitude and slows down the activation kinetics of outward potassium current I(Ks). Muscarinic agonist oxotremorine-M strongly suppresses KCNQ1/KCNE1 current. When associated with KCNE3, forms the potassium channel that is important for cyclic AMP-stimulated intestinal secretion of chloride ions. This interaction with KCNE3 is reduced by 17beta-estradiol, resulting in the reduction of currents. During conditions of increased substrate load, maintains the driving force for proximal tubular and intestinal sodium ions absorption, gastric acid secretion, and cAMP-induced jejunal chloride ions secretion. Allows the provision of potassium ions to the luminal membrane of the secretory canaliculus in the resting state as well as during stimulated acid secretion. When associated with KCNE2, forms a heterooligomer complex leading to currents with an apparently instantaneous activation, a rapid deactivation process and a linear current-voltage relationship and decreases the amplitude of the outward current. When associated with KCNE4, inhibits voltage-gated potassium channel activity. When associated with KCNE5, this complex only conducts current upon strong and continued depolarization. Also forms a heterotetramer with KCNQ5 that has a voltage-gated potassium channel activity. Binds with phosphatidylinositol 4,5-bisphosphate. KCNQ1-KCNE2 channel associates with Na(+)-coupled myo-inositol symporter in the apical membrane of choroid plexus epithelium and regulates the myo-inositol gradient between blood and cerebrospinal fluid with an impact on neuron excitability. In Sus scrofa (Pig), this protein is Potassium voltage-gated channel subfamily KQT member 1.